We begin with the raw amino-acid sequence, 206 residues long: Guanylate kinase (206 aa).

The region spanning 6-184 (GTLYIISAPS…ALDDLKAIFR (179 aa)) is the Guanylate kinase-like domain. Residue 13-20 (APSGAGKS) participates in ATP binding.

Belongs to the guanylate kinase family.

It is found in the cytoplasm. The catalysed reaction is GMP + ATP = GDP + ADP. Functionally, essential for recycling GMP and indirectly, cGMP. The protein is Guanylate kinase of Pseudomonas fluorescens (strain Pf0-1).